Reading from the N-terminus, the 374-residue chain is Aminomethyltransferase (374 aa).

It belongs to the GcvT family. As to quaternary structure, the glycine cleavage system is composed of four proteins: P, T, L and H.

It catalyses the reaction N(6)-[(R)-S(8)-aminomethyldihydrolipoyl]-L-lysyl-[protein] + (6S)-5,6,7,8-tetrahydrofolate = N(6)-[(R)-dihydrolipoyl]-L-lysyl-[protein] + (6R)-5,10-methylene-5,6,7,8-tetrahydrofolate + NH4(+). Its function is as follows. The glycine cleavage system catalyzes the degradation of glycine. The protein is Aminomethyltransferase of Prochlorococcus marinus (strain MIT 9303).